The sequence spans 350 residues: Fe-S cluster assembly protein dre2 (350 aa).

Positions 23-156 (TSFNLRTLLL…KPDHSASVAV (134 aa)) are N-terminal SAM-like domain. The tract at residues 157 to 242 (PLRLRRKDNS…EDTLLTEEDM (86 aa)) is linker. Positions 165–209 (NSKTTAVSNAGPPVSTVEVPVSGKRKSVDMTEDVPEKDVPKNDVP) are disordered. Basic and acidic residues predominate over residues 190 to 208 (KSVDMTEDVPEKDVPKNDV). 4 residues coordinate [2Fe-2S] cluster: Cys252, Cys263, Cys266, and Cys268. Residues 252-268 (CAPRAGKRRRACKDCTC) form a fe-S binding site A region. Residues Cys313, Cys316, Cys324, and Cys327 each coordinate [4Fe-4S] cluster. Short sequence motifs (cx2C motif) lie at residues 313 to 316 (CGNC) and 324 to 327 (CDGC). The tract at residues 313–327 (CGNCSLGDAFRCDGC) is fe-S binding site B.

Belongs to the anamorsin family. Monomer. Interacts with TAH18. Interacts with MIA40. The cofactor is [2Fe-2S] cluster. Requires [4Fe-4S] cluster as cofactor.

The protein localises to the cytoplasm. The protein resides in the mitochondrion intermembrane space. Functionally, component of the cytosolic iron-sulfur (Fe-S) protein assembly (CIA) machinery required for the maturation of extramitochondrial Fe-S proteins. Part of an electron transfer chain functioning in an early step of cytosolic Fe-S biogenesis, facilitating the de novo assembly of a [4Fe-4S] cluster on the scaffold complex CFD1-NBP35. Electrons are transferred to DRE2 from NADPH via the FAD- and FMN-containing protein TAH18. TAH18-DRE2 are also required for the assembly of the diferric tyrosyl radical cofactor of ribonucleotide reductase (RNR), probably by providing electrons for reduction during radical cofactor maturation in the catalytic small subunit RNR2. The sequence is that of Fe-S cluster assembly protein dre2 from Sclerotinia sclerotiorum (strain ATCC 18683 / 1980 / Ss-1) (White mold).